A 359-amino-acid chain; its full sequence is DNA replication and repair protein RecF (359 aa).

An ATP-binding site is contributed by 30–37 (GPNGSGKT).

The protein belongs to the RecF family.

The protein resides in the cytoplasm. In terms of biological role, the RecF protein is involved in DNA metabolism; it is required for DNA replication and normal SOS inducibility. RecF binds preferentially to single-stranded, linear DNA. It also seems to bind ATP. This chain is DNA replication and repair protein RecF, found in Aliivibrio fischeri (strain ATCC 700601 / ES114) (Vibrio fischeri).